The following is a 512-amino-acid chain: Probable cytochrome P450 6d2 (512 aa).

A heme-binding site is contributed by cysteine 457.

It belongs to the cytochrome P450 family. The cofactor is heme.

Its subcellular location is the endoplasmic reticulum membrane. The protein resides in the microsome membrane. May be involved in the metabolism of insect hormones and in the breakdown of synthetic insecticides. This chain is Probable cytochrome P450 6d2 (Cyp6d2), found in Drosophila melanogaster (Fruit fly).